The chain runs to 702 residues: DNA ligase (702 aa).

Residues 32–36 and 81–82 each bind NAD(+); these read DAEYD and SL. The disordered stretch occupies residues 104 to 125; it reads AESSAQKASLNPLVRDSDQKNR. Residue Glu-139 participates in NAD(+) binding. The N6-AMP-lysine intermediate role is filled by Lys-141. NAD(+)-binding residues include Arg-162, Glu-199, Lys-316, and Lys-340. Cys-434, Cys-437, Cys-452, and Cys-458 together coordinate Zn(2+). In terms of domain architecture, BRCT spans 616–702; that stretch reads KPNHPFRDKT…KALKPEGTKV (87 aa).

It belongs to the NAD-dependent DNA ligase family. LigA subfamily. Requires Mg(2+) as cofactor. It depends on Mn(2+) as a cofactor.

The enzyme catalyses NAD(+) + (deoxyribonucleotide)n-3'-hydroxyl + 5'-phospho-(deoxyribonucleotide)m = (deoxyribonucleotide)n+m + AMP + beta-nicotinamide D-nucleotide.. Functionally, DNA ligase that catalyzes the formation of phosphodiester linkages between 5'-phosphoryl and 3'-hydroxyl groups in double-stranded DNA using NAD as a coenzyme and as the energy source for the reaction. It is essential for DNA replication and repair of damaged DNA. The polypeptide is DNA ligase (Hamiltonella defensa subsp. Acyrthosiphon pisum (strain 5AT)).